The chain runs to 227 residues: Probable FKBP-type 25 kDa peptidyl-prolyl cis-trans isomerase (227 aa).

The PPIase FKBP-type domain occupies 144-227 (ATQVHVRYRG…VFEIDLLGFR (84 aa)).

This sequence belongs to the FKBP-type PPIase family.

The catalysed reaction is [protein]-peptidylproline (omega=180) = [protein]-peptidylproline (omega=0). Its function is as follows. PPIases accelerate the folding of proteins. The protein is Probable FKBP-type 25 kDa peptidyl-prolyl cis-trans isomerase (fkl) of Pseudomonas aeruginosa (strain ATCC 15692 / DSM 22644 / CIP 104116 / JCM 14847 / LMG 12228 / 1C / PRS 101 / PAO1).